The following is a 108-amino-acid chain: MSVPRARLLQLVKARCELFSTTFNPEGIRTGNKILRQRLKGPALATYYPRKNVGIRELQKEFGTLGLEVDDEVDDDRLEHLAALRARDKGAPKKKRTAPSAADAKKKK.

Positions 84–108 are disordered; the sequence is LRARDKGAPKKKRTAPSAADAKKKK.

Belongs to the mitochondrion-specific ribosomal protein mS33 family. Component of the mitochondrial small ribosomal subunit (mt-SSU). Mature N.crassa 74S mitochondrial ribosomes consist of a small (37S) and a large (54S) subunit. The 37S small subunit contains a 16S ribosomal RNA (16S mt-rRNA) and 32 different proteins. The 54S large subunit contains a 23S rRNA (23S mt-rRNA) and 42 different proteins.

Its subcellular location is the mitochondrion. In terms of biological role, component of the mitochondrial ribosome (mitoribosome), a dedicated translation machinery responsible for the synthesis of mitochondrial genome-encoded proteins, including at least some of the essential transmembrane subunits of the mitochondrial respiratory chain. The mitoribosomes are attached to the mitochondrial inner membrane and translation products are cotranslationally integrated into the membrane. This is Small ribosomal subunit protein mS33 (rsm27) from Neurospora crassa (strain ATCC 24698 / 74-OR23-1A / CBS 708.71 / DSM 1257 / FGSC 987).